The sequence spans 769 residues: Apoptotic enhancer 1 protein (769 aa).

3 disordered regions span residues 69-88 (PVRV…SQQY), 265-396 (SVEP…LDES), and 451-518 (PQLP…RSDD). The segment covering 275-284 (QQQQPSPQMM) has biased composition (low complexity). Basic and acidic residues predominate over residues 285–295 (KSEEFSEKRDL). Positions 339-353 (STDPHSNHSSPSTSS) are enriched in low complexity. Polar residues-rich tracts occupy residues 354 to 378 (QKAP…TMTR), 453 to 467 (LPTS…TSET), and 474 to 491 (NSES…NNLE). 2 ANK repeats span residues 585-617 (EGIT…AQDS) and 618-652 (DGWT…TLSD). The 63-residue stretch at 684–746 (INTGKVYAAY…PRTYLALYPS (63 aa)) folds into the SH3 domain.

The protein belongs to the iASPP family. As to quaternary structure, interacts with cep-1/p53; the interaction inhibits pro-apoptotic activity of cep-1.

It is found in the nucleus. Its function is as follows. Negetively regulates apoptosis via its interaction with cep-1. The protein is Apoptotic enhancer 1 protein of Caenorhabditis elegans.